We begin with the raw amino-acid sequence, 1181 residues long: Katanin p80 WD40 repeat-containing subunit B1 homolog KTN80.2 (1181 aa).

WD repeat units lie at residues 13 to 53 (AHSA…SLMS), 56 to 95 (GHTS…MVRA), 98 to 137 (GHRS…CIQT), 140 to 181 (GHSR…HEFK), 183 to 221 (HEGP…LIGS), 224 to 264 (PEAT…DGVD), and 266 to 303 (GWST…IEPY). The short motif at 114–130 (FLASGSSDANLKIWDIR) is the DWD box element. Disordered stretches follow at residues 361-383 (AHKS…NKSL), 503-597 (KPPR…ESKS), 702-739 (TSMA…QTRT), 754-869 (KMKS…VIST), and 988-1008 (TKTQ…ISGR). Polar residues-rich tracts occupy residues 365–379 (GSLS…QAGD) and 509–526 (RSPS…STDS). Composition is skewed to basic and acidic residues over residues 530–553 (DSKK…DDRG) and 569–585 (RSER…ELKS). 4 stretches are compositionally biased toward polar residues: residues 703-739 (SMAT…QTRT), 754-791 (KMKS…TRTS), 822-841 (SATN…QAKT), and 850-859 (ILNQRQTTNM). Residues 998-1008 (TQKEEPQISGR) show a composition bias toward basic and acidic residues.

The protein belongs to the WD repeat KATNB1 family. In terms of assembly, component of KTN80-KTN1 complexes composed of a hexamer of KTN1-KTN80 heterodimers that sense microtubule (MT) geometry to confer precise MT severing. Interacts directly with AAA1/KTN1. Interacts with subunits of the CUL4-based E3 ligase complex DDB1A and DDB1B. As to expression, expressed at low levels in siliques, flowers, leaves, stems and roots.

It is found in the cytoplasm. The protein resides in the cytoskeleton. In terms of biological role, may participate in a complex which severs microtubules in an ATP-dependent manner. Microtubule severing may promote rapid reorganization of cellular microtubule arrays. Confers precision to microtubule (MT) severing by specific targeting of KTN1 to MT cleavage sites such as crossover or branching nucleation sites. Together with other KTN80s, regulates cell elongation by modulating MT organization. Negative regulator of abscisic acid (ABA) responses. May function as a substrate receptor for cullin-RING ubiquitin ligase 4 complexes (CRL4), a family of E3 ligases involved in protein degradation. In Arabidopsis thaliana (Mouse-ear cress), this protein is Katanin p80 WD40 repeat-containing subunit B1 homolog KTN80.2.